Reading from the N-terminus, the 118-residue chain is Large ribosomal subunit protein bL19 (118 aa).

It belongs to the bacterial ribosomal protein bL19 family.

This protein is located at the 30S-50S ribosomal subunit interface and may play a role in the structure and function of the aminoacyl-tRNA binding site. This chain is Large ribosomal subunit protein bL19, found in Buchnera aphidicola subsp. Baizongia pistaciae (strain Bp).